The primary structure comprises 651 residues: Probable potassium transport system protein Kup (651 aa).

Transmembrane regions (helical) follow at residues 41–61 (LVLG…IYAF), 82–102 (VVSL…VLFV), 130–150 (LILG…VITP), 163–183 (IVAP…LVTL), 194–214 (VAIV…ASGL), 235–255 (FLTV…LAMT), 276–296 (WLWI…AFIL), 309–329 (MIPS…TVIA), 366–386 (IYIP…VLGF), 395–415 (AYGI…YIVM), 426–446 (ALPI…ANII), and 450–470 (EGGW…WTWV).

This sequence belongs to the HAK/KUP transporter (TC 2.A.72) family.

The protein localises to the cell inner membrane. It catalyses the reaction K(+)(in) + H(+)(in) = K(+)(out) + H(+)(out). Transport of potassium into the cell. Likely operates as a K(+):H(+) symporter. The polypeptide is Probable potassium transport system protein Kup (Brucella canis (strain ATCC 23365 / NCTC 10854 / RM-666)).